A 366-amino-acid polypeptide reads, in one-letter code: RISC-loading complex subunit TARBP2 (366 aa).

Sufficient for interaction with PRKRA stretches follow at residues 22–105, 152–234, and 287–366; these read MLAA…EPAL, SPQQ…DARD, and LGAL…AGSK. The DRBM 1 domain occupies 30 to 97; that stretch reads TPISLLQEYG…AEVALKHLKG (68 aa). Residues 135-158 are disordered; sequence PSAVPTRSSPMEVQPPVSPQQSEC. Serine 152 is subject to Phosphoserine. DRBM domains are found at residues 159-227 and 293-361; these read NPVG…RVHT and ACCS…YLKI. The tract at residues 228-366 is sufficient for interaction with DICER1; that stretch reads VPLDARDGNE…QYLKIMAGSK (139 aa).

The protein belongs to the TARBP2 family. Self-associates. Component of the RISC loading complex (RLC), or micro-RNA (miRNA) loading complex (miRLC), which is composed of DICER1, AGO2 and TARBP2. Note that the trimeric RLC/miRLC is also referred to as RISC. Interacts with EIF2AK2/PKR and inhibits its protein kinase activity. Interacts with DHX9 and PRKRA. Interacts with DICER1, AGO2, MOV10, EIF6 and RPL7A (60S ribosome subunit); they form a large RNA-induced silencing complex (RISC). Interacts with IRF7; this interaction prevents IRF7 phosphorylation and activation.

The protein resides in the cytoplasm. Its subcellular location is the perinuclear region. The protein localises to the nucleus. In terms of biological role, required for formation of the RNA induced silencing complex (RISC). Component of the RISC loading complex (RLC), also known as the micro-RNA (miRNA) loading complex (miRLC), which is composed of DICER1, AGO2 and TARBP2. Within the RLC/miRLC, DICER1 and TARBP2 are required to process precursor miRNAs (pre-miRNAs) to mature miRNAs and then load them onto AGO2. AGO2 bound to the mature miRNA constitutes the minimal RISC and may subsequently dissociate from DICER1 and TARBP2. May also play a role in the production of short interfering RNAs (siRNAs) from double-stranded RNA (dsRNA) by DICER1. Binds in vitro to the PRM1 3'-UTR. Seems to act as a repressor of translation. For some pre-miRNA substrates, may also alter the choice of cleavage site by DICER1. Negatively regulates IRF7-mediated IFN-beta signaling triggered by viral infection by inhibiting the phosphorylation of IRF7 and promoting its 'Lys'-48-linked ubiquitination and degradation. The polypeptide is RISC-loading complex subunit TARBP2 (Bos taurus (Bovine)).